The following is a 245-amino-acid chain: tRNA pseudouridine synthase A (245 aa).

D52 acts as the Nucleophile in catalysis. Substrate is bound at residue Y111.

Belongs to the tRNA pseudouridine synthase TruA family. Homodimer.

The catalysed reaction is uridine(38/39/40) in tRNA = pseudouridine(38/39/40) in tRNA. In terms of biological role, formation of pseudouridine at positions 38, 39 and 40 in the anticodon stem and loop of transfer RNAs. This Thermotoga sp. (strain RQ2) protein is tRNA pseudouridine synthase A.